The primary structure comprises 962 residues: MREESWEEHDTIQLTAQRKYLAEVQALETLLTRELSVFLTEPGSKKTNIINRITGKTYALPSTELLRLYEHLEQCRKQGALMYFLERQGTYSGLMLDYDLKLNTNAAPPLESPALSRLCHRIFMHIKNTSVLPEGSHKIHFFFTLKPEVVQGKYGFHVLIPGLKLAASTKKSIIASLQHDATVQKILHEQGVTNPESCLDPHSASVPSLLYGSSKLNHKPYQLKTGFELVFDSSDPDYIPIHQIKNIEAYNLVSELSLTNEQGSLVKPVYCEADIAAEKEEEIPVDDHSLSILMLHDPEARYLHKILNLLPPEYYVEYPLWSNVVFALANTSANYRPLAEWFSQKCPEKWNTGGKEKLEKLWNDASRHTEKKITKRSIMYWAHKHAPQQYKEIVEQGYFSILAEYVYSYNGTLEHYMIAKVIYAMMGNKFVVDVDSNGKYVWFEFVLPGQPMNQGEIWKWRKEVNPDELHIYISENFSRVMDRITEHIKYHLSQPHETNILNYYKKLLKAFERSKSKIFNDSFKKGVIRQAEFLFRQRSFIQTLDTNPHLLGVGNGVLSIETIPAKLINHFHEHPIHQYTHICYEPFNPENPWTKLLLNALQDIIPELDARLWIMFYLSTAIFRGLKEALMLLWLGGGCNGKTFLMRLVAMVLGDHYASKLNISLLTSCRETAEKPNSAFMRLKGRGYGYFEETNKSEVLNTSRLKEMVNPGDVTARELNQKQESFQMTATMVAASNYNFIIDTTDHGTWRRLRHYRSKVKFCHNPDPNNSYEKKEDPRFIHEYIMDPNCQNAFFSILVYFWEKLQKEYNGQIKKVFCPTIESETEAYRKSQDTLHRFITERVVESPSAETVYNLSEVVTAYAEWYNTNINVKRHIALELSQELENSVLEKYLQWSPNKTRILKGCRILHKFETLQPGESYIGVSTAGTLLNTPICEPKNKWWEWSPNPSAPPEKEASAPTP.

The SF3 helicase domain maps to 607–775 (ELDARLWIMF…PDPNNSYEKK (169 aa)). 636–643 (GGGCNGKT) contributes to the ATP binding site.

It belongs to the asfivirus helicase C962R family.

This is Putative primase C962R from Ornithodoros (relapsing fever ticks).